Here is a 241-residue protein sequence, read N- to C-terminus: Beta-nerve growth factor (241 aa).

The first 18 residues, 1-18 (MSMLFYTLITAFLIGTQA), serve as a signal peptide directing secretion. A propeptide spanning residues 19–121 (EPHSESNVPA…PFNRTHRSKR (103 aa)) is cleaved from the precursor. Residues Asn-69, Asn-114, and Asn-166 are each glycosylated (N-linked (GlcNAc...) asparagine). 3 cysteine pairs are disulfide-bonded: Cys-136–Cys-201, Cys-179–Cys-229, and Cys-189–Cys-231. Residues Tyr-173 and Lys-209 each contribute to the a 1-acyl-sn-glycero-3-phospho-(1D-myo-inositol) site. Position 209 (Lys-209) interacts with a 1-acyl-sn-glycero-3-phospho-L-serine.

Belongs to the NGF-beta family. In terms of assembly, homodimer. The homodimer interacts with a single NTRK1 chain. The homodimer interacts with a single NGFR chain. The NGF dimer interacts with a single SORCS2 chain (via extracellular domain). The NGF precursor (proNGF) binds to a receptor complex formed by SORT1 and NGFR, which leads to NGF endocytosis. Both mature NGF and the immature NGF precursor (proNGF) interact with SORCS2 and with the heterodimer formed by SORCS2 and NGFR (via extracellular domains). The NGF precursor (proNGF) has much higher affinity for SORCS2 than mature NGF. The NGF precursor (proNGF) has much higher affinity for SORT1 than mature NGF. Interacts with ADAM10 in a divalent cation-dependent manner. Interacts with SORCS3.

It localises to the secreted. The protein localises to the endosome lumen. In terms of biological role, nerve growth factor is important for the development and maintenance of the sympathetic and sensory nervous systems. Extracellular ligand for the NTRK1 and NGFR receptors, activates cellular signaling cascades to regulate neuronal proliferation, differentiation and survival. The immature NGF precursor (proNGF) functions as a ligand for the heterodimeric receptor formed by SORCS2 and NGFR, and activates cellular signaling cascades that lead to inactivation of RAC1 and/or RAC2, reorganization of the actin cytoskeleton and neuronal growth cone collapse. In contrast to mature NGF, the precursor form (proNGF) promotes neuronal apoptosis (in vitro). Inhibits metalloproteinase-dependent proteolysis of platelet glycoprotein VI. Binds lysophosphatidylinositol and lysophosphatidylserine between the two chains of the homodimer. The lipid-bound form promotes histamine relase from mast cells, contrary to the lipid-free form. The protein is Beta-nerve growth factor (NGF) of Pan troglodytes (Chimpanzee).